The following is a 55-amino-acid chain: Large ribosomal subunit protein bL32 (55 aa).

Residues 1-19 are compositionally biased toward basic residues; it reads MAVPKRRMSRANTHTRRSQ. The disordered stretch occupies residues 1–21; it reads MAVPKRRMSRANTHTRRSQWK.

Belongs to the bacterial ribosomal protein bL32 family.

The sequence is that of Large ribosomal subunit protein bL32 from Corynebacterium kroppenstedtii (strain DSM 44385 / JCM 11950 / CIP 105744 / CCUG 35717).